A 234-amino-acid chain; its full sequence is Probable transcriptional regulatory protein MYCGA1330 (234 aa).

Belongs to the TACO1 family.

It localises to the cytoplasm. The polypeptide is Probable transcriptional regulatory protein MYCGA1330 (Mycoplasmoides gallisepticum (strain R(low / passage 15 / clone 2)) (Mycoplasma gallisepticum)).